We begin with the raw amino-acid sequence, 285 residues long: Tropomyosin-2 (285 aa).

Positions 1-277 form a coiled coil; sequence MDAIKKKMQA…KDIGDDLDTA (277 aa). The tract at residues 103–133 is disordered; sequence EERLATATAKLSEASQAADESERARKVLENR. Over residues 122 to 133 the composition is skewed to basic and acidic residues; that stretch reads ESERARKVLENR.

The protein belongs to the tropomyosin family. Homodimer.

In terms of biological role, tropomyosin, in association with the troponin complex, plays a central role in the calcium dependent regulation of muscle contraction. This is Tropomyosin-2 from Bombyx mori (Silk moth).